The primary structure comprises 2038 residues: HEAT repeat-containing protein 5A (2038 aa).

2 HEAT repeats span residues 850-887 and 1082-1119; these read EVRR…VADD and LLRR…AAAD. Residues 1646–1668 are disordered; it reads RSAEVDDGASEKETLPEFGEGKD. Phosphoserine is present on Ser1647.

The protein belongs to the HEATR5 family.

This is HEAT repeat-containing protein 5A (Heatr5a) from Mus musculus (Mouse).